Consider the following 197-residue polypeptide: Molybdenum cofactor guanylyltransferase (197 aa).

GTP is bound by residues 12–14 (LAG), lysine 25, asparagine 53, aspartate 71, and aspartate 101. Mg(2+) is bound at residue aspartate 101.

Belongs to the MobA family. Monomer. Mg(2+) serves as cofactor.

It is found in the cytoplasm. It catalyses the reaction Mo-molybdopterin + GTP + H(+) = Mo-molybdopterin guanine dinucleotide + diphosphate. In terms of biological role, transfers a GMP moiety from GTP to Mo-molybdopterin (Mo-MPT) cofactor (Moco or molybdenum cofactor) to form Mo-molybdopterin guanine dinucleotide (Mo-MGD) cofactor. The chain is Molybdenum cofactor guanylyltransferase from Bordetella pertussis (strain Tohama I / ATCC BAA-589 / NCTC 13251).